A 78-amino-acid chain; its full sequence is uncharacterized protein (78 aa).

The signal sequence occupies residues 1–45 (MPVIAIIAIVIIVIILNKTGVSDSLTALTLATVAALLTGGGAAGA).

To E.coli YkfL.

This is an uncharacterized protein from Escherichia coli (strain K12).